Consider the following 269-residue polypeptide: 4-hydroxy-tetrahydrodipicolinate reductase (269 aa).

Residues 8 to 13 (GAAGRM) and glutamate 34 each bind NAD(+). Arginine 35 is a binding site for NADP(+). NAD(+) contacts are provided by residues 98–100 (GTT) and 122–125 (APNY). Histidine 155 acts as the Proton donor/acceptor in catalysis. Histidine 156 contacts (S)-2,3,4,5-tetrahydrodipicolinate. Lysine 159 acts as the Proton donor in catalysis. 165–166 (GT) serves as a coordination point for (S)-2,3,4,5-tetrahydrodipicolinate.

This sequence belongs to the DapB family.

The protein localises to the cytoplasm. It catalyses the reaction (S)-2,3,4,5-tetrahydrodipicolinate + NAD(+) + H2O = (2S,4S)-4-hydroxy-2,3,4,5-tetrahydrodipicolinate + NADH + H(+). It carries out the reaction (S)-2,3,4,5-tetrahydrodipicolinate + NADP(+) + H2O = (2S,4S)-4-hydroxy-2,3,4,5-tetrahydrodipicolinate + NADPH + H(+). The protein operates within amino-acid biosynthesis; L-lysine biosynthesis via DAP pathway; (S)-tetrahydrodipicolinate from L-aspartate: step 4/4. In terms of biological role, catalyzes the conversion of 4-hydroxy-tetrahydrodipicolinate (HTPA) to tetrahydrodipicolinate. This is 4-hydroxy-tetrahydrodipicolinate reductase from Vibrio campbellii (strain ATCC BAA-1116).